Here is a 167-residue protein sequence, read N- to C-terminus: MALLNILQYPDERLHTVAKPVEQVDERIRKLIADMFETMYESRGIGLAATQVDVHERVVVMDLTEDRSEPRVFINPVIVEKDGETTYEEGCLSVPGIYDTVTRAERVKVEALNEKGEKFTLEADGLLAICVQHELDHLMGIVFVERLSQLKQGRIKTKLKKRQKHTI.

Fe cation contacts are provided by Cys-91 and His-133. Glu-134 is a catalytic residue. His-137 serves as a coordination point for Fe cation.

The protein belongs to the polypeptide deformylase family. Requires Fe(2+) as cofactor.

It catalyses the reaction N-terminal N-formyl-L-methionyl-[peptide] + H2O = N-terminal L-methionyl-[peptide] + formate. Functionally, removes the formyl group from the N-terminal Met of newly synthesized proteins. Requires at least a dipeptide for an efficient rate of reaction. N-terminal L-methionine is a prerequisite for activity but the enzyme has broad specificity at other positions. This Neisseria meningitidis serogroup C (strain 053442) protein is Peptide deformylase.